A 554-amino-acid polypeptide reads, in one-letter code: Hydroxylamine reductase (554 aa).

The [2Fe-2S] cluster site is built by Cys3, Cys6, Cys18, and Cys25. Residues His252, Glu276, Cys320, Cys408, Cys436, Cys461, Glu495, and Lys497 each coordinate hybrid [4Fe-2O-2S] cluster. Cysteine persulfide is present on Cys408.

This sequence belongs to the HCP family. [2Fe-2S] cluster serves as cofactor. Hybrid [4Fe-2O-2S] cluster is required as a cofactor.

Its subcellular location is the cytoplasm. The catalysed reaction is A + NH4(+) + H2O = hydroxylamine + AH2 + H(+). Catalyzes the reduction of hydroxylamine to form NH(3) and H(2)O. The sequence is that of Hydroxylamine reductase from Shewanella sp. (strain MR-4).